We begin with the raw amino-acid sequence, 1004 residues long: Centriolar coiled-coil protein of 110 kDa (1004 aa).

The interval 1 to 221 (MEEYEEFCEK…SCLAEVTPDP (221 aa)) is CEP97 binding. The stretch at 51 to 90 (EKRKKIQEEKQKALDVQSRKQANRKKALLTRVQEILENVQ) forms a coiled coil. A calmodulin-binding region spans residues 64–82 (LDVQSRKQANRKKALLTRV). Residues 67 to 82 (QSRKQANRKKALLTRV) form a required for interaction with CEP290 region. 2 disordered regions span residues 147 to 194 (PVNN…SSAS) and 239 to 279 (RELS…APPM). S170 bears the Phosphoserine mark. Residues 243–252 (SRSLRNSLKR) are compositionally biased toward low complexity. The segment covering 253 to 276 (SVNETHSDRENDAAKASDCVKEKA) has biased composition (basic and acidic residues). The tract at residues 349 to 564 (ENKVKSLKGP…QTQTSRQQMD (216 aa)) is interaction with CEP76. A phosphoserine mark is found at S364, S370, and S398. The disordered stretch occupies residues 401–433 (GKEEAVDRTAPAAAETTNESETVPKSPTDLTGV). Polar residues predominate over residues 415 to 433 (ETTNESETVPKSPTDLTGV). S550 carries the phosphoserine modification. Residues 641 to 699 (QELLKSKMLAFEEMRKRLEEQHAQQLSLLIAEQEREQEQLQKEIEEQEKMLKEKAVTTD) adopt a coiled-coil conformation. Calmodulin-binding stretches follow at residues 773-813 (GRAQ…DKLK) and 901-916 (VALS…RKKF). Positions 955 to 1004 (LSRQGTPKTSVKGVVQNRQKPSQSRVPNRAPVSGAYAGKTQRKRPNVATI) are disordered. Residues 970–980 (QNRQKPSQSRV) show a composition bias toward polar residues. Residues 994–1004 (TQRKRPNVATI) show a composition bias toward basic residues.

In terms of assembly, interacts with CALM1, CETN2, CEP76, CEP104, CEP290 and TALPID3. Interacts with CEP97. Seems to associate with discrete CETN2, CEP97 and CEP290-containing complexes. Interacts with NEURL4 and CCNF; these interactions are not mutually exclusive and both lead to CCP110 ubiquitination and proteasome-dependent degradation. Via its interaction with NEURL4, may indirectly interact with HERC2. Interacts with KIF24, leading to its recruitment to centrioles. Interacts with USP20 and USP33. Interacts with MPHOSPH9. Interacts (via N-terminal region) with ENKD1 (via central region); ENKD1 competes with CEP97 for binding to CCP110, destabilizing the interaction between CP110 and CEP97 which promotes the removal of CCP110 and CEP97 from the mother centriole and allows the initiation of ciliogenesis. In terms of processing, phosphorylated by CDKs. Post-translationally, ubiquitinated by the SCF(CCNF) during G2 phase, leading to its degradation by the proteasome and preventing centrosome reduplication. Deubiquitinated by USP33 in S and G2/M phase, leading to stabilize CCP110 during the period which centrioles duplicate and elongate. Ubiquitinated by the EDVP complex, leading to its degradation.

The protein resides in the cytoplasm. The protein localises to the cytoskeleton. It localises to the microtubule organizing center. It is found in the centrosome. Its subcellular location is the centriole. The protein resides in the cilium basal body. In terms of biological role, necessary for centrosome duplication at different stages of procentriole formation. Acts as a key negative regulator of ciliogenesis in collaboration with CEP97 by capping the mother centriole thereby preventing cilia formation. Also involved in promoting ciliogenesis. May play a role in the assembly of the mother centriole subdistal appendages (SDA) thereby effecting the fusion of recycling endosomes to basal bodies during cilia formation. Required for correct spindle formation and has a role in regulating cytokinesis and genome stability via cooperation with CALM1 and CETN2. This is Centriolar coiled-coil protein of 110 kDa (Ccp110) from Mus musculus (Mouse).